A 788-amino-acid polypeptide reads, in one-letter code: Cadherin-10 (788 aa).

The signal sequence occupies residues 1 to 22; the sequence is MTIHQFLLLFLFWVCLPHFCSP. Positions 23–54 are excised as a propeptide; that stretch reads EIMFRRTPVPQQRILSSRVPRSDGKILHRQKR. 5 consecutive Cadherin domains span residues 55 to 160, 161 to 269, 270 to 384, 385 to 487, and 488 to 606; these read GWMW…EPTF, PEEI…PPRF, PQNT…PPVF, SRSS…DNAP, and QFAV…LLLP. Over 55-613 the chain is Extracellular; that stretch reads GWMWNQFFLL…LLPAGLSTGA (559 aa). N256 carries an N-linked (GlcNAc...) asparagine glycan. N-linked (GlcNAc...) asparagine glycans are attached at residues N438, N456, and N534. A helical membrane pass occupies residues 614–634; it reads LIAILLCIIILLVIVVLFAAL. Over 635–788 the chain is Cytoplasmic; it reads KRQRKKEPLI…YGGGESDKDS (154 aa). A phosphoserine mark is found at S784 and S788.

Predominantly expressed in brain. Also found in adult and fetal kidney. Very low levels detected in prostate and fetal lung.

The protein localises to the cell membrane. In terms of biological role, cadherins are calcium-dependent cell adhesion proteins. They preferentially interact with themselves in a homophilic manner in connecting cells; cadherins may thus contribute to the sorting of heterogeneous cell types. The protein is Cadherin-10 (CDH10) of Homo sapiens (Human).